Here is a 102-residue protein sequence, read N- to C-terminus: Aspartyl/glutamyl-tRNA(Asn/Gln) amidotransferase subunit C (102 aa).

It belongs to the GatC family. As to quaternary structure, heterotrimer of A, B and C subunits.

It catalyses the reaction L-glutamyl-tRNA(Gln) + L-glutamine + ATP + H2O = L-glutaminyl-tRNA(Gln) + L-glutamate + ADP + phosphate + H(+). The catalysed reaction is L-aspartyl-tRNA(Asn) + L-glutamine + ATP + H2O = L-asparaginyl-tRNA(Asn) + L-glutamate + ADP + phosphate + 2 H(+). In terms of biological role, allows the formation of correctly charged Asn-tRNA(Asn) or Gln-tRNA(Gln) through the transamidation of misacylated Asp-tRNA(Asn) or Glu-tRNA(Gln) in organisms which lack either or both of asparaginyl-tRNA or glutaminyl-tRNA synthetases. The reaction takes place in the presence of glutamine and ATP through an activated phospho-Asp-tRNA(Asn) or phospho-Glu-tRNA(Gln). In Bordetella petrii (strain ATCC BAA-461 / DSM 12804 / CCUG 43448), this protein is Aspartyl/glutamyl-tRNA(Asn/Gln) amidotransferase subunit C.